A 567-amino-acid polypeptide reads, in one-letter code: Adenine deaminase 2 (567 aa).

The protein belongs to the metallo-dependent hydrolases superfamily. Adenine deaminase family. The cofactor is Mn(2+).

It carries out the reaction adenine + H2O + H(+) = hypoxanthine + NH4(+). The sequence is that of Adenine deaminase 2 from Oenococcus oeni (strain ATCC BAA-331 / PSU-1).